A 621-amino-acid polypeptide reads, in one-letter code: Phosphoenolpyruvate carboxykinase [GTP] (621 aa).

Substrate is bound by residues R83 and 217-219; that span reads YGG. K226 and H245 together coordinate Mn(2+). S267 provides a ligand contact to substrate. A GTP-binding site is contributed by 268–273; it reads MCGKTS. C269 is a catalytic residue. D286 contacts Mn(2+). 381 to 383 serves as a coordination point for substrate; sequence NAR. 2 residues coordinate GTP: R383 and R415.

It belongs to the phosphoenolpyruvate carboxykinase [GTP] family. It depends on Mn(2+) as a cofactor.

It localises to the cytoplasm. The catalysed reaction is oxaloacetate + GTP = phosphoenolpyruvate + GDP + CO2. It functions in the pathway carbohydrate biosynthesis; gluconeogenesis. Functionally, catalyzes the conversion of oxaloacetate (OAA) to phosphoenolpyruvate (PEP), the rate-limiting step in the metabolic pathway that produces glucose from lactate and other precursors derived from the citric acid cycle. This is Phosphoenolpyruvate carboxykinase [GTP] from Pyrococcus horikoshii (strain ATCC 700860 / DSM 12428 / JCM 9974 / NBRC 100139 / OT-3).